Reading from the N-terminus, the 669-residue chain is uncharacterized protein (669 aa).

Helical transmembrane passes span 39 to 61 (LCPL…GTSW), 124 to 146 (ISLW…LISI), 153 to 175 (GIIY…YALG), 190 to 212 (GLAF…FFGV), 221 to 243 (FAPG…QTAL), and 263 to 285 (IAAG…IRYL). 2 RCK C-terminal domains span residues 316 to 397 (AGSL…KLIG) and 398 to 483 (KESD…LGGR). Helical transmembrane passes span 484 to 506 (PILN…GYIF), 516 to 538 (IPFA…YWRS), 558 to 580 (IGLN…ESFH), 585 to 607 (IWVA…VVGI), and 645 to 667 (VPYP…FAML).

The protein belongs to the AAE transporter (TC 2.A.81) family.

It is found in the cell membrane. This is an uncharacterized protein from Desulfotalea psychrophila (strain LSv54 / DSM 12343).